The primary structure comprises 1126 residues: Protein translocase subunit SecA (1126 aa).

Residues Gln-175, 193-197 (GEGKT), and Asp-694 contribute to the ATP site. Positions 1060–1126 (VQEAAPEKHE…KYKNCHGQGL (67 aa)) are disordered. Residues 1064–1080 (APEKHEDMSRYRTEKTD) are compositionally biased toward basic and acidic residues. Cys-1110, Cys-1112, Cys-1121, and His-1122 together coordinate Zn(2+).

This sequence belongs to the SecA family. Monomer and homodimer. Part of the essential Sec protein translocation apparatus which comprises SecA, SecYEG and auxiliary proteins SecDF. Other proteins may also be involved. It depends on Zn(2+) as a cofactor.

It localises to the cell inner membrane. The protein resides in the cytoplasm. The catalysed reaction is ATP + H2O + cellular proteinSide 1 = ADP + phosphate + cellular proteinSide 2.. Part of the Sec protein translocase complex. Interacts with the SecYEG preprotein conducting channel. Has a central role in coupling the hydrolysis of ATP to the transfer of proteins into and across the cell membrane, serving as an ATP-driven molecular motor driving the stepwise translocation of polypeptide chains across the membrane. This Parabacteroides distasonis (strain ATCC 8503 / DSM 20701 / CIP 104284 / JCM 5825 / NCTC 11152) protein is Protein translocase subunit SecA.